Consider the following 37-residue polypeptide: Large ribosomal subunit protein bL36c (37 aa).

This sequence belongs to the bacterial ribosomal protein bL36 family.

It localises to the plastid. This is Large ribosomal subunit protein bL36c from Helicosporidium sp. subsp. Simulium jonesii (Green alga).